Reading from the N-terminus, the 116-residue chain is Large ribosomal subunit protein bL20 (116 aa).

This sequence belongs to the bacterial ribosomal protein bL20 family.

In terms of biological role, binds directly to 23S ribosomal RNA and is necessary for the in vitro assembly process of the 50S ribosomal subunit. It is not involved in the protein synthesizing functions of that subunit. This is Large ribosomal subunit protein bL20 from Fusobacterium nucleatum subsp. nucleatum (strain ATCC 25586 / DSM 15643 / BCRC 10681 / CIP 101130 / JCM 8532 / KCTC 2640 / LMG 13131 / VPI 4355).